We begin with the raw amino-acid sequence, 396 residues long: F-box protein pof13 (396 aa).

Positions 40-89 constitute an F-box domain; it reads KNSNLFLLNRDIWSLIINYLDAFDILRLMHSSRQFYYWLRKSAVDECCFN.

In terms of assembly, part of a SCF (SKP1-cullin-F-box) protein ligase complex. Interacts with skp1.

The protein resides in the cytoplasm. The protein operates within protein modification; protein ubiquitination. The protein is F-box protein pof13 (pof13) of Schizosaccharomyces pombe (strain 972 / ATCC 24843) (Fission yeast).